A 427-amino-acid chain; its full sequence is Succinate--CoA ligase [ADP-forming] subunit beta, mitochondrial (427 aa).

A mitochondrion-targeting transit peptide spans 1–30; sequence MYSRKSLSLISKCGQLSRLNAQAALQARRH. One can recognise an ATP-grasp domain in the interval 39-284; that stretch reads AQLLREYGIG…LSQEDPDEVK (246 aa). Residues Lys76 and 83–85 contribute to the ATP site; that span reads GRG. Ser102 carries the phosphoserine modification. Glu144 lines the ATP pocket. The Mg(2+) site is built by Asn236 and Asp253. A phosphoserine mark is found at Ser263 and Ser276. Substrate-binding positions include Asn304 and 361–363; that span reads GIV.

It belongs to the succinate/malate CoA ligase beta subunit family. Heterodimer of an alpha and a beta subunit. Mg(2+) is required as a cofactor.

It is found in the mitochondrion. The catalysed reaction is succinate + ATP + CoA = succinyl-CoA + ADP + phosphate. The protein operates within carbohydrate metabolism; tricarboxylic acid cycle; succinate from succinyl-CoA (ligase route): step 1/1. Its function is as follows. Succinyl-CoA synthetase functions in the citric acid cycle (TCA), coupling the hydrolysis of succinyl-CoA to the synthesis of ATP and thus represents the only step of substrate-level phosphorylation in the TCA. The beta subunit provides nucleotide specificity of the enzyme and binds the substrate succinate, while the binding sites for coenzyme A and phosphate are found in the alpha subunit. The chain is Succinate--CoA ligase [ADP-forming] subunit beta, mitochondrial from Saccharomyces cerevisiae (strain ATCC 204508 / S288c) (Baker's yeast).